Reading from the N-terminus, the 1299-residue chain is Sophorolipid transporter (1299 aa).

Residues 1-64 (MVDDIQVEKR…FCTPLDVFLE (64 aa)) are Cytoplasmic-facing. Residues 65–85 (ILALFFAAVHGAALPMFTLVV) form a helical membrane-spanning segment. The region spanning 65 to 356 (ILALFFAAVH…IAPNVRFLVK (292 aa)) is the ABC transmembrane type-1 1 domain. The Extracellular portion of the chain corresponds to 86-114 (GAIFNTFRDFTSYDLKGNEFQHKVNHLSL). A helical transmembrane segment spans residues 115-135 (YFVYIGIGMLGSAFLESFLLV). At 136–187 (DRGEVLAGRYRKHYLSAVIRQNIAFYDKLGGGEVSTRIINDTNSIQEAISDK) the chain is on the cytoplasmic side. Residues 188-208 (LGNVVQGIASFIAATVISFAS) form a helical membrane-spanning segment. The Extracellular segment spans residues 209–214 (QWKLAC). The chain crosses the membrane as a helical span at residues 215-235 (ILLSAVGFMVITMGTGATFMA). Residues 236–293 (KYQLRSDAIYSQSGATVAEEALSAVRTTVAFGAQPHLAVKYEKVLDRVVKESKRSSYS) are Cytoplasmic-facing. Residues 294–314 (LGVMLACIWASTFWVYALALW) traverse the membrane as a helical segment. Residues 315–326 (QGSREIVSGSAD) lie on the Extracellular side of the membrane. The helical transmembrane segment at 327–347 (VGKIIVVITAMLLGSFQLGNI) threads the bilayer. The Cytoplasmic segment spans residues 348-725 (APNVRFLVKG…WGLNRKEWGY (378 aa)). Positions 393–638 (IELKNVKFRY…EGPYKALVDA (246 aa)) constitute an ABC transporter 1 domain. Residue 428–435 (GASGSGKS) participates in ATP binding. Polar residues predominate over residues 681–690 (SAGTQTTQPP). The disordered stretch occupies residues 681–703 (SAGTQTTQPPEYQENDIPGVRNP). The chain crosses the membrane as a helical span at residues 726–746 (ILIGSLASIILGYCYPAMAII). One can recognise an ABC transmembrane type-1 2 domain in the interval 727–1016 (LIGSLASIIL…IFSYAPNMNS (290 aa)). Over 747 to 769 (TGQTTGSMVLPPSEYGKMRHVVN) the chain is Extracellular. The chain crosses the membrane as a helical span at residues 770–790 (IMGWWYFFVGCISFMTAFITI). At 791–848 (AALSLASDKLVKNIRLALFRQLMRMDIAFFDHKNNTPGALTSILAKEAKMIEGLSGAT) the chain is on the cytoplasmic side. The helical transmembrane segment at 849–869 (LGQIQQSLVTLIGGIVTGIPF) threads the bilayer. The Extracellular segment spans residues 870 to 874 (NWRIG). The chain crosses the membrane as a helical span at residues 875 to 895 (LVATSVVPVMLVCGFVRVWVL). Topologically, residues 896 to 954 (TQLSDRAREVYERSGSMASEYTSAVRTVQSLTRELDVVVKYTKTVDSQIFSSRIAIARS) are cytoplasmic. Residues 955 to 975 (ALYYALSEGMTPWVVALVFWW) traverse the membrane as a helical segment. Residues 976–987 (GSTVMRRGEASV) lie on the Extracellular side of the membrane. Residues 988–1008 (AGYMTVFMAIITGSQAAGQIF) form a helical membrane-spanning segment. Residues 1009–1299 (SYAPNMNSAK…LVNLQGLGEI (291 aa)) lie on the Cytoplasmic side of the membrane. Residues 1053–1293 (IEFRHVNFRY…NGWYAELVNL (241 aa)) form the ABC transporter 2 domain. ATP is bound at residue 1088-1095 (GASGCGKS).

This sequence belongs to the ABC transporter superfamily. ABCB family. Multidrug resistance exporter (TC 3.A.1.201) subfamily.

It is found in the cell membrane. Its function is as follows. Transports acidic acylated and non-acylated sophorolipids (SLs) into the extracellular space, where they can be lactonized by lactone esterase. This Starmerella bombicola (Yeast) protein is Sophorolipid transporter (mdr).